Consider the following 622-residue polypeptide: Threonine--tRNA ligase (622 aa).

The tract at residues 1-136 (MKTLLIHSDY…PLSELSRKIT (136 aa)) is editing domain. A catalytic region spans residues 199–498 (PHVKYIKEKE…TLENKPPALP (300 aa)). Residues C291, H343, and H467 each coordinate Zn(2+).

It belongs to the class-II aminoacyl-tRNA synthetase family. Homodimer. It depends on Zn(2+) as a cofactor.

The protein localises to the cytoplasm. It catalyses the reaction tRNA(Thr) + L-threonine + ATP = L-threonyl-tRNA(Thr) + AMP + diphosphate + H(+). Catalyzes the attachment of threonine to tRNA(Thr) in a two-step reaction: L-threonine is first activated by ATP to form Thr-AMP and then transferred to the acceptor end of tRNA(Thr). Also edits incorrectly charged L-seryl-tRNA(Thr). The polypeptide is Threonine--tRNA ligase (Methanococcus maripaludis (strain DSM 14266 / JCM 13030 / NBRC 101832 / S2 / LL)).